Here is a 282-residue protein sequence, read N- to C-terminus: Aquaporin NIP1-1 (282 aa).

The next 2 membrane-spanning stretches (helical) occupy residues 46–66 and 74–94; these read IIAE…AVTI and ITFP…VYAV. Positions 103-105 match the NPA 1 motif; it reads NPA. 3 helical membrane-spanning segments follow: residues 125–145, 162–182, and 186–206; these read VLAQ…MFGG, SLVI…GVAT, and AIGE…VLIA. The NPA 2 signature appears at 215–217; the sequence is NPA. A helical transmembrane segment spans residues 232–252; the sequence is IWVYVVGPVVGAVAGAWAYNL.

The protein belongs to the MIP/aquaporin (TC 1.A.8) family. NIP (TC 1.A.8.12) subfamily.

It is found in the membrane. Its function is as follows. Aquaporins facilitate the transport of water and small neutral solutes across cell membranes. The polypeptide is Aquaporin NIP1-1 (NIP1-1) (Zea mays (Maize)).